The chain runs to 734 residues: Ribosomal RNA large subunit methyltransferase K/L (734 aa).

Residues 43–154 (VGYRSCLWSR…RNQLTLSLDL (112 aa)) form the THUMP domain.

The protein belongs to the methyltransferase superfamily. RlmKL family.

It is found in the cytoplasm. The catalysed reaction is guanosine(2445) in 23S rRNA + S-adenosyl-L-methionine = N(2)-methylguanosine(2445) in 23S rRNA + S-adenosyl-L-homocysteine + H(+). It catalyses the reaction guanosine(2069) in 23S rRNA + S-adenosyl-L-methionine = N(2)-methylguanosine(2069) in 23S rRNA + S-adenosyl-L-homocysteine + H(+). Functionally, specifically methylates the guanine in position 2445 (m2G2445) and the guanine in position 2069 (m7G2069) of 23S rRNA. This is Ribosomal RNA large subunit methyltransferase K/L from Hydrogenovibrio crunogenus (strain DSM 25203 / XCL-2) (Thiomicrospira crunogena).